Here is a 449-residue protein sequence, read N- to C-terminus: Glycerol-3-phosphate acyltransferase 3 (449 aa).

3 helical membrane passes run 9–29, 146–166, and 170–190; these read FVLL…PAMF, ISVR…CVLL, and ITLA…VGFL. Residues 238 to 243 carry the HXXXXD motif motif; sequence HTSPID. The chain crosses the membrane as a helical span at residues 358 to 378; the sequence is MVSYILRMMTSWAIVCNVWYL.

It belongs to the 1-acyl-sn-glycerol-3-phosphate acyltransferase family.

Its subcellular location is the endoplasmic reticulum membrane. The enzyme catalyses sn-glycerol 3-phosphate + an acyl-CoA = a 1-acyl-sn-glycero-3-phosphate + CoA. The catalysed reaction is a 1-acyl-sn-glycero-3-phosphate + an acyl-CoA = a 1,2-diacyl-sn-glycero-3-phosphate + CoA. It carries out the reaction dodecanoyl-CoA + sn-glycerol 3-phosphate = 1-dodecanoyl-sn-glycerol 3-phosphate + CoA. It catalyses the reaction sn-glycerol 3-phosphate + hexadecanoyl-CoA = 1-hexadecanoyl-sn-glycero-3-phosphate + CoA. The enzyme catalyses sn-glycerol 3-phosphate + (9Z)-octadecenoyl-CoA = 1-(9Z-octadecenoyl)-sn-glycero-3-phosphate + CoA. The catalysed reaction is (9Z,12Z)-octadecadienoyl-CoA + sn-glycerol 3-phosphate = 1-(9Z,12Z)-octadecadienoyl-sn-glycero-3-phosphate + CoA. It carries out the reaction 1-tetradecanoyl-sn-glycerol 3-phosphate + (9Z)-octadecenoyl-CoA = 1-tetradecanoyl-2-(9Z)-octadecenoyl-sn-glycero-3-phosphate + CoA. It catalyses the reaction 1-hexadecanoyl-sn-glycero-3-phosphate + (9Z)-octadecenoyl-CoA = 1-hexadecanoyl-2-(9Z-octadecenoyl)-sn-glycero-3-phosphate + CoA. The enzyme catalyses 1-(9Z-octadecenoyl)-sn-glycero-3-phosphate + (9Z)-octadecenoyl-CoA = 1,2-di-(9Z-octadecenoyl)-sn-glycero-3-phosphate + CoA. The catalysed reaction is 1-(6Z,9Z,12Z-octadecatrienoyl)-sn-glycero-3-phosphate + (9Z)-octadecenoyl-CoA = (6Z,9Z,12Z)-octadecatrienoyl-2-(9Z)-octadecenoyl-sn-glycero-3-phosphate + CoA. It carries out the reaction 1-(9Z,12Z,15Z)-octadecatrienoyl-sn-glycero-3-phosphate + (9Z)-octadecenoyl-CoA = 1-(9Z,12Z,15Z)-octadecatrienoyl-2-(9Z)-octadecenoyl-sn-glycero-3-phosphate + CoA. It catalyses the reaction 1-(9Z-octadecenoyl)-sn-glycero-3-phosphate + tetradecanoyl-CoA = 1-(9Z)-octadecenoyl-2-tetradecanoyl-sn-glycero-3-phosphate + CoA. The enzyme catalyses 1-(9Z-octadecenoyl)-sn-glycero-3-phosphate + hexadecanoyl-CoA = 1-(9Z)-octadecenoyl-2-hexadecanoyl-sn-glycero-3-phosphate + CoA. The catalysed reaction is 1-(9Z-octadecenoyl)-sn-glycero-3-phosphate + octadecanoyl-CoA = 1-(9Z-octadecenoyl)-2-octadecanoyl-sn-glycero-3-phosphate + CoA. It carries out the reaction 1-(9Z-octadecenoyl)-sn-glycero-3-phosphate + (9Z,12Z)-octadecadienoyl-CoA = 1-(9Z)-octadecenoyl-2-(9Z,12Z)-octadecadienoyl-sn-glycero-3-phosphate + CoA. It catalyses the reaction 1-(5Z,8Z,11Z,14Z-eicosatetraenoyl)-sn-glycero-3-phosphate + (9Z)-octadecenoyl-CoA = 1-(5Z,8Z,11Z,14Z)-eicosatetraenoyl-2-(9Z)-octadecenoyl-sn-glycero-3-phosphate + CoA. It participates in glycerolipid metabolism; triacylglycerol biosynthesis. The protein operates within phospholipid metabolism; CDP-diacylglycerol biosynthesis; CDP-diacylglycerol from sn-glycerol 3-phosphate: step 1/3. In terms of biological role, converts glycerol-3-phosphate to 1-acyl-sn-glycerol-3-phosphate (lysophosphatidic acid or LPA) by incorporating an acyl moiety at the sn-1 position of the glycerol backbone. Also converts LPA into 1,2-diacyl-sn-glycerol-3-phosphate (phosphatidic acid or PA) by incorporating an acyl moiety at the sn-2 position of the glycerol backbone. Protects cells against lipotoxicity. This chain is Glycerol-3-phosphate acyltransferase 3, found in Danio rerio (Zebrafish).